The sequence spans 325 residues: MKVFRRAWRHRVALGLGGLAFCGTTLLYLARCASEGETPSASGAARPRAKAFLAVLVASAPRAVERRTAVRSTWLAPERRGGPEDVWARFAVGTGGLGSEERRALELEQAQHGDLLLLPALRDAYENLTAKVLAMLTWLDERVDFEFVLKADDDSFARLDAILVDLRAREPARRRRLYWGFFSGRGRVKPGGRWREAAWQLCDYYLPYALGGGYVLSADLVHYLRLSREYLRAWHSEDVSLGTWLAPVDVQREHDPRFDTEYKSRGCNNQYLVTHKQSPEDMLEKQQMLLHEGRLCKHEVQLRLSYVYDWSAPPSQCCQRKEGVP.

At 1–11 (MKVFRRAWRHR) the chain is on the cytoplasmic side. Residues 12-30 (VALGLGGLAFCGTTLLYLA) form a helical; Signal-anchor for type II membrane protein membrane-spanning segment. Residues 31 to 325 (RCASEGETPS…QCCQRKEGVP (295 aa)) are Lumenal-facing. N127 carries N-linked (GlcNAc...) asparagine glycosylation.

Belongs to the glycosyltransferase 31 family. Mn(2+) serves as cofactor.

Its subcellular location is the golgi apparatus. It localises to the golgi stack membrane. It catalyses the reaction 3-O-(beta-D-galactosyl-(1-&gt;4)-beta-D-xylosyl)-L-seryl-[protein] + UDP-alpha-D-galactose = 3-O-(beta-D-galactosyl-(1-&gt;3)-beta-D-galactosyl-(1-&gt;4)-beta-D-xylosyl)-L-seryl-[protein] + UDP + H(+). It participates in glycan metabolism; chondroitin sulfate biosynthesis. It functions in the pathway glycan metabolism; heparan sulfate biosynthesis. Functionally, beta-1,3-galactosyltransferase that transfers galactose from UDP-galactose to substrates with a terminal beta-linked galactose residue. Has a preference for galactose-beta-1,4-xylose that is found in the linker region of glycosaminoglycans, such as heparan sulfate and chondroitin sulfate. Has no activity towards substrates with terminal glucosamine or galactosamine residues. This Mus musculus (Mouse) protein is Beta-1,3-galactosyltransferase 6 (B3galt6).